The sequence spans 33 residues: NVACVHRTCDSNCKRNGYKSGKCINRKCNCYPH.

Intrachain disulfides connect cysteine 4–cysteine 23, cysteine 9–cysteine 28, and cysteine 13–cysteine 30.

In terms of tissue distribution, expressed by the venom gland.

The protein resides in the secreted. Inhibits less than 5% of human voltage-gated potassium (Kv) channel Kv1.3/KCNA3 currents at 100nM concentration and does not block human Kv1.1/KCNA1 and Kv1.2/KCNA2 currents. This Centruroides bonito (Scorpion) protein is Potassium channel toxin alpha-KTx 10.5.